The sequence spans 1370 residues: MEVCRLENRPLPHAAVEANLLRQVKESAAEGLFKSFQLLVGKDVRENSVRFEVLLGVYANVIEFVKFLETGLAASCINTEFRDLKRMVDGKIQFKVSVPTIAHSDGRRPNKQRQYIVMKCTSKHHISAEIELAIADLENMHMEPETDLDMLEYIGTVKTVTSALQFGIDALERGLIDTVLSVKLRHAPPLFILQSLSDPTLTERGLKKSIKSDLVSMFKDHLITHSFFINKAEALATPRQYILGMLSSIINSVSKETVFKGTSTYTTSSGEPVAGVIETTDAILNKLLTLLGEYKTEVVGPAAYASYVVRGENLVTAVSYGRAMRSFEQFKNKLVDDPVGQAGSLDKNADSDNEYSSLPQTTIPVSVVKVGSQPVIVESIQKMYNEAQAPFPLNRRMQYTYFFPLGLFIPRPKYTTSTSVKLEDDSCLSSEVWVVNKTNTPLCFNYQNALRTLCHPRVNSPSACLQELQRSNLADNALEAFRDGLRSRPMDNMNLFAHVRRFYLKRTEVVLLPIAQKCNLSTDDLLHPTNHKLLQLELHPLFDFVVERVAAEEAAFRATHRTFSGNIPQPLAPNQFQDSRGKQFEAATSLQHAVDDATLEVIRSTAFDPTYPFICYIVEAMIHGQPEKFTMNIPFISLCINTYWDNSGNLAFINSFFMVKNICTHMGGGLINRDAYALYRKILGEVVAIKHAIVRMCGAEQLGNNELQGYVNGLLDRQLLPPFAYRDTFAQLDNRGARFVIGAKEHDNSQAFVHALPDFENANQVAPAMYHTRNTFNWDTFEYITVSNGNNDADAADLEKIYYYVMLPVCTNGHMCGMGADFENIAIVLGYNIPVFDIPQFNGDDTVLEHLENGPLRDILIASEVNPTADMLRMMIVSYLNCPQMTQVVRVKTRRDHCQNLGPEQGAIIEHTVMVNGFVCFGIPERMKQVAKNMFYPVPFHRFYCDPLVAGSWDNHIQNYVMNNFSQRSLEAFNAPPGIMADYAEWHKAPMAKYITSCKASTASLSAFTVMHNKLSPIAFIVQAKHKIHPGFALTVLRTDEVLAENVMFSARASTSVFVGRPTVSRREVRADAVSFEVNHELATIETGLSYSSVVTPAHVASITTDMGIYCQNLFSIFSNEIYDHADVNNYVARKIGVEDAVNRHNPRALIAGVGQISHPPGLVHGQYATCEVIPTPVTADVAYFQKSNSPRGRASCVVSSDINNQERAEQFLYDHSLPDPAYEYRSTVNPWASQKGSLGDVLYGSRYRQVSSPGIYSPSKPFFNKEEMLKNNRSFYTLVNEYAQRLAGYAATSCTDLQYVVINGTDVFLEQPCLFLQEAFPTLSASHRVLLDEYMSFKNTHAPVHMGHYFIEEVAPVKRVFKIGNKVAS.

The protein belongs to the herpesviridae major capsid protein family. Homomultimer. Makes the hexons and eleven out of twelve pentons. Interacts with triplex proteins 1/TRX1 and 2/TRX2; adjacent capsomers are linked together in groups of three by triplexes, heterotrimeric complexes composed of one molecule of TRX1 and two molecules of TRX2. Interacts with scaffold protein; this interaction allows efficient MCP transport to the host nucleus. Interacts with capsid vertex component 2/CVC2. Interacts with the small capsomere-interacting protein/SCP.

It is found in the virion. Its subcellular location is the host nucleus. Functionally, self-assembles to form an icosahedral capsid with a T=16 symmetry, about 200 nm in diameter, and consisting of 150 hexons and 12 pentons (total of 162 capsomers). Hexons form the edges and faces of the capsid and are each composed of six MCP molecules. In contrast, one penton is found at each of the 12 vertices. Eleven of the pentons are MCP pentamers, while the last vertex is occupied by the portal complex. The capsid is surrounded by a layer of proteinaceous material designated the tegument which, in turn, is enclosed in an envelope of host cell-derived lipids containing virus-encoded glycoproteins. This chain is Major capsid protein, found in Connochaetes taurinus (Blue wildebeest).